The chain runs to 116 residues: Iron-sulfur cluster insertion protein ErpA (116 aa).

Cys-44, Cys-108, and Cys-110 together coordinate iron-sulfur cluster.

The protein belongs to the HesB/IscA family. In terms of assembly, homodimer. Iron-sulfur cluster serves as cofactor.

Required for insertion of 4Fe-4S clusters for at least IspG. This Pseudomonas aeruginosa (strain LESB58) protein is Iron-sulfur cluster insertion protein ErpA.